The primary structure comprises 1308 residues: Contactin-associated protein-like 4 (1308 aa).

The first 25 residues, 1-25 (MGSVTGAVLKTLLLLSTQNWNRVEA), serve as a signal peptide directing secretion. The Extracellular segment spans residues 26–1241 (GNSYDCDDPL…LANAIKSDSA (1216 aa)). The 147-residue stretch at 31-177 (CDDPLVSALP…IGMRIEVFGC (147 aa)) folds into the F5/8 type C domain. The cysteines at positions 31 and 177 are disulfide-linked. 2 Laminin G-like domains span residues 212–364 (FKTM…SFSC) and 398–547 (FRTW…IDSC). N-linked (GlcNAc...) asparagine glycosylation is found at Asn-260, Asn-285, Asn-359, and Asn-538. Disulfide bonds link Cys-332–Cys-364, Cys-515–Cys-547, Cys-553–Cys-564, and Cys-558–Cys-573. An EGF-like 1 domain is found at 549–586 (ISDRCLPNYCEHGGECSQSWSTFHCNCTNTGYRGATCH). N-linked (GlcNAc...) asparagine glycosylation is present at Asn-574. A disulfide bridge connects residues Cys-575 and Cys-585. The 206-residue stretch at 587–792 (NSIYEQSCEA…LLCQGDRSFW (206 aa)) folds into the Fibrinogen C-terminal domain. 5 N-linked (GlcNAc...) asparagine glycosylation sites follow: Asn-602, Asn-625, Asn-637, Asn-706, and Asn-748. The region spanning 793 to 957 (NSASFDTEAS…AQVTPEVQPG (165 aa)) is the Laminin G-like 3 domain. Intrachain disulfides connect Cys-931-Cys-958, Cys-962-Cys-975, Cys-969-Cys-984, and Cys-986-Cys-996. The EGF-like 2 domain maps to 958 to 997 (CRGHCSSYGKLCRNGGKCRERPIGFFCDCTFSAYTGPFCS). Asn-1023 and Asn-1073 each carry an N-linked (GlcNAc...) asparagine glycan. One can recognise a Laminin G-like 4 domain in the interval 1046-1202 (FRTTRTPSLL…VTGHVTESSC (157 aa)). Residues Cys-1167 and Cys-1202 are joined by a disulfide bond. Residues 1242–1262 (VIGGLIAVVIFILLCITAIAV) form a helical membrane-spanning segment. Over 1263–1308 (RIYQQKRLYKRSEAKRSENVDSAEAVLKSELNIQNAVNENQKEYFF) the chain is Cytoplasmic.

The protein belongs to the neurexin family. In terms of assembly, interacts with TIAM1.

Its subcellular location is the presynaptic cell membrane. Presynaptic protein involved in both dopaminergic synaptic transmission and GABAergic system, thereby participating in the structural maturation of inhibitory interneuron synapses. Involved in the dopaminergic synaptic transmission by attenuating dopamine release through a presynaptic mechanism. Also participates in the GABAergic system. This is Contactin-associated protein-like 4 (CNTNAP4) from Homo sapiens (Human).